The primary structure comprises 613 residues: Chaperone protein DnaK (613 aa).

Thr173 bears the Phosphothreonine; by autocatalysis mark. The tract at residues 577-613 (AKQAQAQQEGGAEGAQKADDNVVDAEYEEVNDDQEKK) is disordered. Positions 597 to 613 (NVVDAEYEEVNDDQEKK) are enriched in acidic residues.

This sequence belongs to the heat shock protein 70 family.

Functionally, acts as a chaperone. This is Chaperone protein DnaK from Bacillus pumilus (strain SAFR-032).